Reading from the N-terminus, the 509-residue chain is Probable glycine dehydrogenase (decarboxylating) subunit 2 (509 aa).

The residue at position 278 (Lys278) is an N6-(pyridoxal phosphate)lysine.

This sequence belongs to the GcvP family. C-terminal subunit subfamily. In terms of assembly, the glycine cleavage system is composed of four proteins: P, T, L and H. In this organism, the P 'protein' is a heterodimer of two subunits. It depends on pyridoxal 5'-phosphate as a cofactor.

It catalyses the reaction N(6)-[(R)-lipoyl]-L-lysyl-[glycine-cleavage complex H protein] + glycine + H(+) = N(6)-[(R)-S(8)-aminomethyldihydrolipoyl]-L-lysyl-[glycine-cleavage complex H protein] + CO2. Functionally, the glycine cleavage system catalyzes the degradation of glycine. The P protein binds the alpha-amino group of glycine through its pyridoxal phosphate cofactor; CO(2) is released and the remaining methylamine moiety is then transferred to the lipoamide cofactor of the H protein. The chain is Probable glycine dehydrogenase (decarboxylating) subunit 2 from Saccharolobus islandicus (strain Y.N.15.51 / Yellowstone #2) (Sulfolobus islandicus).